The following is a 504-amino-acid chain: L-amino-acid oxidase (504 aa).

An N-terminal signal peptide occupies residues 1–18; the sequence is MNIFFMFSLLFLATLGSC. Cys-28 and Cys-191 are disulfide-bonded. Residues 61 to 62, 81 to 82, Arg-89, and 105 to 108 each bind FAD; these read MS, EA, and GPMR. Residue Arg-108 coordinates substrate. A glycan (N-linked (GlcNAc...) asparagine) is linked at Asn-190. A substrate-binding site is contributed by His-241. Val-279 provides a ligand contact to FAD. A disulfide bridge links Cys-349 with Cys-430. Residue Asn-379 is glycosylated (N-linked (GlcNAc...) asparagine). Position 390 (Tyr-390) interacts with substrate. Residues Glu-475 and 482-487 contribute to the FAD site; that span reads GWIDST. Position 482–483 (482–483) interacts with substrate; the sequence is GW.

The protein belongs to the flavin monoamine oxidase family. FIG1 subfamily. As to quaternary structure, homodimer; non-covalently linked. The cofactor is FAD. Expressed by the venom gland.

It is found in the secreted. It catalyses the reaction an L-alpha-amino acid + O2 + H2O = a 2-oxocarboxylate + H2O2 + NH4(+). Its function is as follows. Catalyzes an oxidative deamination of predominantly hydrophobic and aromatic L-amino acids, thus producing hydrogen peroxide that may contribute to the diverse toxic effects of this enzyme. Exhibits diverse biological activities, such as hemorrhage, hemolysis, edema, apoptosis of vascular endothelial cells or tumor cell lines, antibacterial and antiparasitic activities, as well as regulation of platelet aggregation. Its effect on platelets is controversial, since it either induces aggregation or inhibits agonist-induced aggregation. These different effects are probably due to different experimental conditions. The chain is L-amino-acid oxidase from Echis ocellatus (Ocellated saw-scaled viper).